We begin with the raw amino-acid sequence, 145 residues long: Enhancer of mRNA-decapping protein 2 (145 aa).

Disordered stretches follow at residues 1–74 (MGSE…DKAT) and 89–115 (PKKK…IDSK). The segment covering 29–42 (TKTQILVPPTQSLP) has biased composition (polar residues). Residues 55-73 (QRREPRERTSKTGHEDDKA) are compositionally biased toward basic and acidic residues. Positions 89 to 102 (PKKKSCKYKKKKTR) are enriched in basic residues.

It belongs to the EDC family.

It localises to the cytoplasm. Its subcellular location is the nucleus. Functionally, mRNA-binding protein which stimulates mRNA decapping by DCP1 and DCP2. The protein is Enhancer of mRNA-decapping protein 2 (EDC2) of Saccharomyces cerevisiae (strain ATCC 204508 / S288c) (Baker's yeast).